The sequence spans 157 residues: Trafficking protein particle complex subunit 6b (157 aa).

This sequence belongs to the TRAPP small subunits family. BET3 subfamily. Homodimer. Part of a TRAPP complex.

The protein resides in the golgi apparatus. It localises to the cis-Golgi network. Its subcellular location is the endoplasmic reticulum. Functionally, component of a transport protein particle (TRAPP) complex that may function in specific stages of inter-organelle traffic. Specifically involved in the early development of neural circuitry, likely by controlling the frequency and amplitude of intracellular calcium transients implicated in the regulation of neuron differentiation and survival. In Danio rerio (Zebrafish), this protein is Trafficking protein particle complex subunit 6b.